The chain runs to 101 residues: Small ribosomal subunit protein uS10 (101 aa).

This sequence belongs to the universal ribosomal protein uS10 family. Part of the 30S ribosomal subunit.

Its function is as follows. Involved in the binding of tRNA to the ribosomes. This is Small ribosomal subunit protein uS10 from Anaeromyxobacter dehalogenans (strain 2CP-C).